An 81-amino-acid polypeptide reads, in one-letter code: MEKIVFRKIVFVAFLLSLSCLLEGEARMSGDVTIQRGGSCNNDNTCHDTCPGCRITQCIFRQCVCTRCNTPRSSLRIESHM.

Residues 1–26 (MEKIVFRKIVFVAFLLSLSCLLEGEA) form the signal peptide. 3 cysteine pairs are disulfide-bonded: C40–C58, C46–C63, and C50–C65.

Belongs to the DEFL family.

The protein resides in the secreted. The chain is Defensin-like protein 266 from Arabidopsis thaliana (Mouse-ear cress).